A 101-amino-acid chain; its full sequence is NAD(P)H-quinone oxidoreductase subunit 4L, chloroplastic (101 aa).

3 helical membrane-spanning segments follow: residues 2–22 (MLEH…YGLI), 32–52 (MCLE…SDFF), and 61–81 (IFSI…LAIV).

It belongs to the complex I subunit 4L family. As to quaternary structure, NDH is composed of at least 16 different subunits, 5 of which are encoded in the nucleus.

It is found in the plastid. The protein localises to the chloroplast thylakoid membrane. It catalyses the reaction a plastoquinone + NADH + (n+1) H(+)(in) = a plastoquinol + NAD(+) + n H(+)(out). It carries out the reaction a plastoquinone + NADPH + (n+1) H(+)(in) = a plastoquinol + NADP(+) + n H(+)(out). Functionally, NDH shuttles electrons from NAD(P)H:plastoquinone, via FMN and iron-sulfur (Fe-S) centers, to quinones in the photosynthetic chain and possibly in a chloroplast respiratory chain. The immediate electron acceptor for the enzyme in this species is believed to be plastoquinone. Couples the redox reaction to proton translocation, and thus conserves the redox energy in a proton gradient. This chain is NAD(P)H-quinone oxidoreductase subunit 4L, chloroplastic, found in Panax ginseng (Korean ginseng).